We begin with the raw amino-acid sequence, 491 residues long: Glucose-6-phosphate 1-dehydrogenase (491 aa).

NADP(+)-binding positions include arginine 50, 92 to 93 (DV), and lysine 147. Substrate is bound by residues histidine 177, lysine 181, glutamate 215, and aspartate 234. Catalysis depends on histidine 239, which acts as the Proton acceptor. 2 residues coordinate substrate: lysine 339 and lysine 344.

The protein belongs to the glucose-6-phosphate dehydrogenase family.

The enzyme catalyses D-glucose 6-phosphate + NADP(+) = 6-phospho-D-glucono-1,5-lactone + NADPH + H(+). Its pathway is carbohydrate degradation; pentose phosphate pathway; D-ribulose 5-phosphate from D-glucose 6-phosphate (oxidative stage): step 1/3. Functionally, catalyzes the oxidation of glucose 6-phosphate to 6-phosphogluconolactone. The protein is Glucose-6-phosphate 1-dehydrogenase of Dickeya dadantii (strain 3937) (Erwinia chrysanthemi (strain 3937)).